Reading from the N-terminus, the 120-residue chain is Large ribosomal subunit protein uL18 (120 aa).

This sequence belongs to the universal ribosomal protein uL18 family. In terms of assembly, part of the 50S ribosomal subunit; part of the 5S rRNA/L5/L18/L25 subcomplex. Contacts the 5S and 23S rRNAs.

Its function is as follows. This is one of the proteins that bind and probably mediate the attachment of the 5S RNA into the large ribosomal subunit, where it forms part of the central protuberance. The sequence is that of Large ribosomal subunit protein uL18 from Nitrobacter hamburgensis (strain DSM 10229 / NCIMB 13809 / X14).